A 374-amino-acid polypeptide reads, in one-letter code: Putative glutamate--cysteine ligase 2-2 (374 aa).

This sequence belongs to the glutamate--cysteine ligase type 2 family. YbdK subfamily.

It catalyses the reaction L-cysteine + L-glutamate + ATP = gamma-L-glutamyl-L-cysteine + ADP + phosphate + H(+). In terms of biological role, ATP-dependent carboxylate-amine ligase which exhibits weak glutamate--cysteine ligase activity. The protein is Putative glutamate--cysteine ligase 2-2 of Rhodococcus jostii (strain RHA1).